A 414-amino-acid polypeptide reads, in one-letter code: Putative ankyrin repeat protein BB_B28 (414 aa).

ANK repeat units follow at residues 326–355 (NGNP…NINL) and 359–389 (NSQT…NPNI).

The polypeptide is Putative ankyrin repeat protein BB_B28 (Borreliella burgdorferi (strain ATCC 35210 / DSM 4680 / CIP 102532 / B31) (Borrelia burgdorferi)).